Reading from the N-terminus, the 192-residue chain is Putative manganese efflux pump MntP (192 aa).

Transmembrane regions (helical) follow at residues 2–22 (IAII…AFAV), 41–61 (SALW…YAAS), 62–82 (AFSA…LAFI), 109–129 (MLPL…SLAF), 136–156 (FAIL…LYIG), and 172–192 (GVVL…VIAF).

The protein belongs to the MntP (TC 9.B.29) family.

It localises to the cell membrane. Its function is as follows. Probably functions as a manganese efflux pump. The sequence is that of Putative manganese efflux pump MntP from Bifidobacterium longum subsp. infantis (strain ATCC 15697 / DSM 20088 / JCM 1222 / NCTC 11817 / S12).